The sequence spans 670 residues: Serine/threonine-rich protein adg2 (670 aa).

Residues 1–19 form the signal peptide; sequence MRRLTISGLLISLAKLCAG. N-linked (GlcNAc...) asparagine glycans are attached at residues Asn-77, Asn-159, Asn-204, Asn-224, Asn-274, Asn-297, Asn-327, Asn-351, Asn-370, Asn-381, Asn-405, Asn-424, Asn-435, Asn-459, Asn-478, Asn-489, and Asn-513. A disordered region spans residues 526-651; sequence GSVSSFSSSP…MSLPPSAGSS (126 aa).

It localises to the secreted. It is found in the endoplasmic reticulum. This is Serine/threonine-rich protein adg2 (adg2) from Schizosaccharomyces pombe (strain 972 / ATCC 24843) (Fission yeast).